Consider the following 411-residue polypeptide: Secretion apparatus protein BsaZ (411 aa).

Transmembrane regions (helical) follow at residues 28–48 (IVAL…VDLT), 80–100 (IAAP…LVQS), 137–157 (ALLY…LYHA), and 175–195 (IVLT…VLIL). A disordered region spans residues 341–411 (AANRGGPPPE…APARTGDQNA (71 aa)). Low complexity predominate over residues 370 to 404 (DACADNAFPDDAPPGAAAPNAGSPDSPAPDGGAPA).

It belongs to the type III secretion exporter family.

The protein resides in the cell membrane. In terms of biological role, part of the bsa type III secretion system, is involved in the intracellular replication of invading bacteria inside the host cell. Probably necessary for the lysis of the vacuole membrane and escape into the host cell cytoplasm. The sequence is that of Secretion apparatus protein BsaZ (bsaZ) from Burkholderia pseudomallei (strain 1106a).